We begin with the raw amino-acid sequence, 1177 residues long: DNA-directed RNA polymerase subunit beta (1177 aa).

Over residues 1147 to 1161 (DDTEIEMRDTEDDDD) the composition is skewed to acidic residues. A disordered region spans residues 1147–1177 (DDTEIEMRDTEDDDDHQSADKLNVEVETTKE). Positions 1162–1177 (HQSADKLNVEVETTKE) are enriched in basic and acidic residues.

This sequence belongs to the RNA polymerase beta chain family. The RNAP catalytic core consists of 2 alpha, 1 beta, 1 beta' and 1 omega subunit. When a sigma factor is associated with the core the holoenzyme is formed, which can initiate transcription.

The enzyme catalyses RNA(n) + a ribonucleoside 5'-triphosphate = RNA(n+1) + diphosphate. Functionally, DNA-dependent RNA polymerase catalyzes the transcription of DNA into RNA using the four ribonucleoside triphosphates as substrates. This Bacillus thuringiensis (strain Al Hakam) protein is DNA-directed RNA polymerase subunit beta.